A 437-amino-acid polypeptide reads, in one-letter code: UDP-N-acetylmuramoylalanine--D-glutamate ligase (437 aa).

115-121 serves as a coordination point for ATP; sequence GSNGKST.

The protein belongs to the MurCDEF family.

It localises to the cytoplasm. It carries out the reaction UDP-N-acetyl-alpha-D-muramoyl-L-alanine + D-glutamate + ATP = UDP-N-acetyl-alpha-D-muramoyl-L-alanyl-D-glutamate + ADP + phosphate + H(+). The protein operates within cell wall biogenesis; peptidoglycan biosynthesis. In terms of biological role, cell wall formation. Catalyzes the addition of glutamate to the nucleotide precursor UDP-N-acetylmuramoyl-L-alanine (UMA). The polypeptide is UDP-N-acetylmuramoylalanine--D-glutamate ligase (Vibrio campbellii (strain ATCC BAA-1116)).